A 339-amino-acid polypeptide reads, in one-letter code: Ketol-acid reductoisomerase (NADP(+)) (339 aa).

A KARI N-terminal Rossmann domain is found at 1–182 (MRVYYDRDAD…GGGRAGIIET (182 aa)). NADP(+) contacts are provided by residues 24 to 27 (YGSQ), arginine 48, serine 51, serine 53, and 83 to 86 (DELQ). The active site involves histidine 108. Residue glycine 134 participates in NADP(+) binding. In terms of domain architecture, KARI C-terminal knotted spans 183–328 (TFREECETDL…AKLRDMMPWI (146 aa)). The Mg(2+) site is built by aspartate 191, glutamate 195, glutamate 227, and glutamate 231. Position 252 (serine 252) interacts with substrate.

This sequence belongs to the ketol-acid reductoisomerase family. Requires Mg(2+) as cofactor.

It catalyses the reaction (2R)-2,3-dihydroxy-3-methylbutanoate + NADP(+) = (2S)-2-acetolactate + NADPH + H(+). It carries out the reaction (2R,3R)-2,3-dihydroxy-3-methylpentanoate + NADP(+) = (S)-2-ethyl-2-hydroxy-3-oxobutanoate + NADPH + H(+). It functions in the pathway amino-acid biosynthesis; L-isoleucine biosynthesis; L-isoleucine from 2-oxobutanoate: step 2/4. The protein operates within amino-acid biosynthesis; L-valine biosynthesis; L-valine from pyruvate: step 2/4. Its function is as follows. Involved in the biosynthesis of branched-chain amino acids (BCAA). Catalyzes an alkyl-migration followed by a ketol-acid reduction of (S)-2-acetolactate (S2AL) to yield (R)-2,3-dihydroxy-isovalerate. In the isomerase reaction, S2AL is rearranged via a Mg-dependent methyl migration to produce 3-hydroxy-3-methyl-2-ketobutyrate (HMKB). In the reductase reaction, this 2-ketoacid undergoes a metal-dependent reduction by NADPH to yield (R)-2,3-dihydroxy-isovalerate. This is Ketol-acid reductoisomerase (NADP(+)) from Nitrobacter hamburgensis (strain DSM 10229 / NCIMB 13809 / X14).